The chain runs to 242 residues: ATP-dependent dethiobiotin synthetase BioD (242 aa).

ATP is bound at residue 12 to 17; the sequence is EVGKTV. Mg(2+) is bound at residue Thr-16. Lys-37 is a catalytic residue. Ser-41 is a substrate binding site. ATP is bound by residues Asp-51 and 112 to 115; that span reads EGAG. Residues Asp-51 and Glu-112 each coordinate Mg(2+).

Belongs to the dethiobiotin synthetase family. In terms of assembly, homodimer. The cofactor is Mg(2+).

It is found in the cytoplasm. It catalyses the reaction (7R,8S)-7,8-diammoniononanoate + CO2 + ATP = (4R,5S)-dethiobiotin + ADP + phosphate + 3 H(+). The protein operates within cofactor biosynthesis; biotin biosynthesis; biotin from 7,8-diaminononanoate: step 1/2. Functionally, catalyzes a mechanistically unusual reaction, the ATP-dependent insertion of CO2 between the N7 and N8 nitrogen atoms of 7,8-diaminopelargonic acid (DAPA, also called 7,8-diammoniononanoate) to form a ureido ring. This Bacillus cereus (strain AH820) protein is ATP-dependent dethiobiotin synthetase BioD.